Here is a 483-residue protein sequence, read N- to C-terminus: tRNA-2-methylthio-N(6)-dimethylallyladenosine synthase (483 aa).

The 118-residue stretch at 31 to 148 folds into the MTTase N-terminal domain; it reads KKLYIETQGC…LPQMLDQHHA (118 aa). [4Fe-4S] cluster contacts are provided by Cys-40, Cys-77, Cys-111, Cys-192, Cys-196, and Cys-199. The 233-residue stretch at 178–410 folds into the Radical SAM core domain; sequence RVEGFKAFVS…QQVIKQSSIE (233 aa). A TRAM domain is found at 413–477; the sequence is DAMLGKIERV…LNLVYGELLN (65 aa).

The protein belongs to the methylthiotransferase family. MiaB subfamily. As to quaternary structure, monomer. Requires [4Fe-4S] cluster as cofactor.

The protein resides in the cytoplasm. It catalyses the reaction N(6)-dimethylallyladenosine(37) in tRNA + (sulfur carrier)-SH + AH2 + 2 S-adenosyl-L-methionine = 2-methylsulfanyl-N(6)-dimethylallyladenosine(37) in tRNA + (sulfur carrier)-H + 5'-deoxyadenosine + L-methionine + A + S-adenosyl-L-homocysteine + 2 H(+). In terms of biological role, catalyzes the methylthiolation of N6-(dimethylallyl)adenosine (i(6)A), leading to the formation of 2-methylthio-N6-(dimethylallyl)adenosine (ms(2)i(6)A) at position 37 in tRNAs that read codons beginning with uridine. The sequence is that of tRNA-2-methylthio-N(6)-dimethylallyladenosine synthase from Acinetobacter baumannii (strain AB0057).